The sequence spans 124 residues: Probable glycine cleavage system H protein (124 aa).

Residues 25–106 (TATIGITDYA…PYGSWLVKMA (82 aa)) enclose the Lipoyl-binding domain. Lys66 is modified (N6-lipoyllysine).

The protein belongs to the GcvH family. As to quaternary structure, the glycine cleavage system is composed of four proteins: P, T, L and H. (R)-lipoate serves as cofactor.

The glycine cleavage system catalyzes the degradation of glycine. The H protein shuttles the methylamine group of glycine from the P protein to the T protein. The sequence is that of Probable glycine cleavage system H protein from Thermoplasma acidophilum (strain ATCC 25905 / DSM 1728 / JCM 9062 / NBRC 15155 / AMRC-C165).